The primary structure comprises 484 residues: Auxin transporter-like protein 2 (484 aa).

Residues 1–59 are Cytoplasmic-facing; that stretch reads MLPQKQGEEAIVSSFNETDQQEGVVGREEEVEDHSFSVKNFLWHGGSVWDAWFSCASNQ. The chain crosses the membrane as a helical span at residues 60-77; sequence VAQVLLTLPYSFSQLGML. At 78–79 the chain is on the extracellular side; the sequence is SG. A helical membrane pass occupies residues 80–100; it reads ILLQVFYGILGSWTAYLISVL. Residues 101–135 lie on the Cytoplasmic side of the membrane; sequence YVEYRSRKEKENVNFKNHVIQWFEVLDGLLGPYWK. Residues 136–156 traverse the membrane as a helical segment; the sequence is ALGLAFNCTFLLFGSVIQLIA. The Extracellular segment spans residues 157–172; sequence CASNIYYINDNLDKRT. A helical transmembrane segment spans residues 173 to 193; it reads WTYIFGACCATTVFIPSFHNY. Topologically, residues 194 to 196 are cytoplasmic; the sequence is RIW. Residues 197–217 form a helical membrane-spanning segment; that stretch reads SFLGLGMTTYTAWYLTIASIV. Topologically, residues 218–232 are extracellular; it reads HGQAENVTHTGPKKL. The N-linked (GlcNAc...) asparagine glycan is linked to asparagine 223. A helical transmembrane segment spans residues 233–253; sequence VLYFTGATNILYTFGGHAVTV. Residues 254 to 266 are Cytoplasmic-facing; the sequence is EIMHAMWKPQKFK. Residues 267–287 traverse the membrane as a helical segment; it reads YIYLMATLYVFTLTIPSATAV. The Extracellular portion of the chain corresponds to 288-314; the sequence is YWAFGDELLNHSNAFSLLPKNGWRDGA. Asparagine 297 is a glycosylation site (N-linked (GlcNAc...) asparagine). A helical transmembrane segment spans residues 315 to 335; the sequence is VILMLIHQFITFGFACTPLYF. The Cytoplasmic segment spans residues 336 to 356; it reads VWEKVIGMHDTRSICLRALAR. A helical transmembrane segment spans residues 357-377; that stretch reads LPVVIPIWFLAIIFPFFGPIN. A topological domain (extracellular) is located at residue serine 378. Residues 379–399 traverse the membrane as a helical segment; that stretch reads AVGALLVSFTVYIIPSAAHML. Over 400–425 the chain is Cytoplasmic; the sequence is TYRKASARKNAAEKPPFFMPSWTAMY. Residues 426–446 traverse the membrane as a helical segment; sequence IFNAFIVIWVLVVGFGFGGWA. Over 447-484 the chain is Extracellular; sequence SMTNFIRQIDTFGLFAKCYQCKPPPVMAAAPPPHALHH.

The protein belongs to the amino acid/polyamine transporter 2 family. Amino acid/auxin permease (AAAP) (TC 2.A.18.1) subfamily. Shoots and roots of nodulating plants. Higher levels in roots, flowers and stems, lower in nodules, leaves, petioles and shoot apices.

It is found in the cell membrane. In terms of biological role, carrier protein involved in proton-driven auxin influx. Mediates the formation of auxin gradient from developing leaves (site of auxin biosynthesis) to tips by contributing to the loading of auxin in vascular tissues and facilitating acropetal (base to tip) auxin transport within inner tissues of the root apex, and basipetal (tip to base) auxin transport within outer tissues of the root apex. May be involved in lateral roots and nodules formation. The chain is Auxin transporter-like protein 2 (LAX2) from Medicago truncatula (Barrel medic).